A 135-amino-acid polypeptide reads, in one-letter code: Probable disulfide formation protein (135 aa).

Residues 7-26 (SYCLYFAWLVSCIGTLMSVY) traverse the membrane as a helical segment. Cys36 and Cys39 are oxidised to a cystine. Helical transmembrane passes span 41 to 60 (YQRI…AYLD) and 67 to 84 (YALP…YQVC). Cys96 and Cys101 are oxidised to a cystine. A helical membrane pass occupies residues 109–131 (GFITMPMASALAFFAIANLLIFA).

Belongs to the DsbB family. BdbC subfamily.

The protein resides in the cell inner membrane. Its function is as follows. Required for disulfide bond formation in some proteins. This is Probable disulfide formation protein from Chlamydia muridarum (strain MoPn / Nigg).